Here is a 326-residue protein sequence, read N- to C-terminus: ELAV-like protein 1-B (326 aa).

RRM domains are found at residues 20-98, 106-186, and 244-322; these read TNLI…FARP, ANLY…FAAN, and WCIF…FKTS.

Belongs to the RRM elav family. As to quaternary structure, interacts (via RRM3) with cirbp. Unable to form oligomers. Part of a ribonucleoprotein (RNP) complex, at least composed of elavl1/elrA and/or elavl2/elrB, igf2bp3/vg1RBP, ddx6/Xp54, ybx2/frgy2, lsm14b/rap55b and, in a subset of RNP complexes, stau1/staufen.

It localises to the cytoplasm. Its subcellular location is the cell cortex. Its function is as follows. RNA-binding protein that binds to the 3'-UTR region of mRNAs and increases their stability. Involved in embryonic stem cells (ESCs) differentiation: preferentially binds mRNAs that are not methylated by N6-methyladenosine (m6A), stabilizing them, promoting ESCs differentiation. Binds to poly-U elements and AU-rich elements (AREs) in the 3'-UTR of target mRNAs. Acts cooperatively with cribp to stabilize AU-rich sequence (ARE)-containing mRNAs. May play a role during gastrulation. Required for the vegetal localization of vg1 mRNA. The polypeptide is ELAV-like protein 1-B (elavl1-b) (Xenopus laevis (African clawed frog)).